Reading from the N-terminus, the 344-residue chain is Uroporphyrinogen decarboxylase (344 aa).

Substrate contacts are provided by residues 26–30, Asp76, Tyr151, Ser206, and His321; that span reads RQAGR.

This sequence belongs to the uroporphyrinogen decarboxylase family. Homodimer.

The protein resides in the cytoplasm. The catalysed reaction is uroporphyrinogen III + 4 H(+) = coproporphyrinogen III + 4 CO2. Its pathway is porphyrin-containing compound metabolism; protoporphyrin-IX biosynthesis; coproporphyrinogen-III from 5-aminolevulinate: step 4/4. Functionally, catalyzes the decarboxylation of four acetate groups of uroporphyrinogen-III to yield coproporphyrinogen-III. The protein is Uroporphyrinogen decarboxylase of Sinorhizobium fredii (strain NBRC 101917 / NGR234).